Here is a 471-residue protein sequence, read N- to C-terminus: Pancreatic lipase-related protein 2 (471 aa).

The signal sequence occupies residues 1-17 (MLPSWTIGLLLLATVRG). Cysteine 21 and cysteine 27 form a disulfide bridge. An N-linked (GlcNAc...) asparagine glycan is attached at asparagine 71. The tract at residues 93–105 (IHGFIDKGEDSWP) is required for galactolipase activity. Cysteine 109 and cysteine 120 form a disulfide bridge. The active-site Nucleophile is serine 171. Aspartate 195 (charge relay system) is an active-site residue. Glutamate 206, arginine 209, aspartate 211, and aspartate 214 together coordinate Ca(2+). A disulfide bond links cysteine 256 and cysteine 280. Residues 257–279 (QKNTLSTIVDVDGIWEGIEDFAA) form a required for galactolipase activity region. Catalysis depends on histidine 282, which acts as the Charge relay system. 2 disulfide bridges follow: cysteine 304–cysteine 317 and cysteine 320–cysteine 325. Residue asparagine 355 is glycosylated (N-linked (GlcNAc...) asparagine). In terms of domain architecture, PLAT spans 359 to 471 (WRYRVSVTLA…ENILQTLNPC (113 aa)). Cysteines 455 and 471 form a disulfide.

It belongs to the AB hydrolase superfamily. Lipase family.

The protein localises to the secreted. It localises to the zymogen granule membrane. Its subcellular location is the cell projection. It is found in the neuron projection. It carries out the reaction a triacylglycerol + H2O = a diacylglycerol + a fatty acid + H(+). The catalysed reaction is a 1,2-diacyl-3-O-(beta-D-galactosyl)-sn-glycerol + 2 H2O = 3-beta-D-galactosyl-sn-glycerol + 2 a fatty acid + 2 H(+). The enzyme catalyses 1,2,3-tri-(9Z-octadecenoyl)-glycerol + H2O = di-(9Z)-octadecenoylglycerol + (9Z)-octadecenoate + H(+). It catalyses the reaction di-(9Z)-octadecenoylglycerol + H2O = (9Z-octadecenoyl)-glycerol + (9Z)-octadecenoate + H(+). It carries out the reaction (9Z-octadecenoyl)-glycerol + H2O = glycerol + (9Z)-octadecenoate + H(+). The catalysed reaction is 1-(9Z-octadecenoyl)-glycerol + H2O = glycerol + (9Z)-octadecenoate + H(+). The enzyme catalyses 1,2,3-tripropanoylglycerol + H2O = dipropanoylglycerol + propanoate + H(+). It catalyses the reaction 1,2,3-tributanoylglycerol + H2O = dibutanoylglycerol + butanoate + H(+). It carries out the reaction 1,2,3-trioctanoylglycerol + H2O = dioctanoylglycerol + octanoate + H(+). The catalysed reaction is 1,2-didecanoylglycerol + H2O = decanoylglycerol + decanoate + H(+). The enzyme catalyses long chain 1,2-diacyl-3-O-beta-D-galactosyl-sn-glycerol + H2O = long chain acyl-3-O-beta-D-galactosyl-sn-glycerol + a fatty acid + H(+). It catalyses the reaction 1,2-dioctanoyl-3-O-beta-D-galactosyl-sn-glycerol + H2O = octanoyl-3-(beta-D-galactosyl)-sn-glycerol + octanoate + H(+). It carries out the reaction 1,2-didodecanoyl-3-beta-D-galactosyl-sn-glycerol + H2O = dodecanoyl-3-beta-D-galactosyl-sn-glycerol + dodecanoate + H(+). The catalysed reaction is 1-beta-D-galactosyl-2,3-didodecanoyl-sn-glycerol + H2O = 1-beta-D-galactosyl-dodecanoyl-sn-glycerol + dodecanoate + H(+). The enzyme catalyses a 1,2-diacyl-3-O-[alpha-D-galactosyl-(1-&gt;6)-beta-D-galactosyl]-sn-glycerol + H2O = acyl-3-O-[alpha-D-galactosyl-(1-&gt;6)-beta-D-galactosyl]-sn-glycerol + a fatty acid + H(+). It catalyses the reaction long chain 1,2-diacyl-3-O-[alpha-D-galactosyl-(1-&gt;6)-beta-D-galactosyl]-sn-glycerol + H2O = long chain acyl-3-O-[alpha-D-galactosyl-(1-&gt;6)-beta-D-galactosyl]-sn-glycerol + a fatty acid + H(+). It carries out the reaction 1,2-dioctanoyl-3-O-[alpha-D-galactosyl-(1-&gt;6)-beta-D-galactosyl]-sn-glycerol + H2O = octanoyl-3-O-[alpha-D-galactosyl-(1-&gt;6)-beta-D-galactosyl]-sn-glycerol + octanoate + H(+). The catalysed reaction is 1,2-didodecanoyl-3-O-[alpha-D-galactosyl-(1-&gt;6)-beta-D-galactosyl]-sn-glycerol + H2O = dodecanoyl-3-O-[alpha-D-galactosyl-(1-&gt;6)-beta-D-galactosyl]-sn-glycerol + dodecanoate + H(+). The enzyme catalyses a 1,2-diacyl-sn-glycero-3-phosphocholine + H2O = a monoacyl-sn-glycero-3-phosphocholine + a fatty acid + H(+). Its pathway is glycerolipid metabolism; triacylglycerol degradation. It participates in glycolipid metabolism. Its activity is regulated as follows. Up-regulated by CLPS in the presence of increasing concentrations of bile salts. In terms of biological role, lipase that primarily hydrolyzes triglycerides and galactosylglycerides. In neonates, may play a major role in pancreatic digestion of dietary fats such as milk fat globules enriched in long-chain triglycerides. Hydrolyzes short-, medium- and long-chain fatty acyls in triglycerides without apparent positional specificity. Can completely deacylate triacylglycerols. When the liver matures and bile salt synthesis increases, likely functions mainly as a galactolipase and monoacylglycerol lipase. Hydrolyzes monogalactosyldiglycerols (MGDG) and digalactosyldiacylglycerols (DGDG) present in a plant-based diet, releasing long-chain polyunsaturated fatty acids. Hydrolyzes medium- and long-chain fatty acyls in galactolipids. May act together with LIPF to hydrolyze partially digested triglycerides. Hydrolyzes long-chain monoglycerides with high efficiency. In cytotoxic T cells, contributes to perforin-dependent cell lysis, but is unlikely to mediate direct cytotoxicity. Also has low phospholipase activity. In neurons, required for the localization of the phospholipid 1-oleoyl-2-palmitoyl-PC (OPPC) to neurite tips through acyl chain remodeling of membrane phospholipids. The resulting OPPC-rich lipid membrane domain recruits the t-SNARE protein STX4 by selectively interacting with the STX4 transmembrane domain and this promotes surface expression of the dopamine transporter SLC6A3/DAT at neurite tips by facilitating fusion of SLC6A3-containing transport vesicles with the plasma membrane. The polypeptide is Pancreatic lipase-related protein 2 (PNLIPRP2) (Sus scrofa (Pig)).